A 372-amino-acid polypeptide reads, in one-letter code: Glycerol-3-phosphate dehydrogenase [NAD(+)] (372 aa).

Positions methionine 1–serine 16 are enriched in polar residues. Residues methionine 1 to serine 23 are disordered. Residues glycine 29–glycine 34, phenylalanine 60, phenylalanine 117, lysine 140, and alanine 173 contribute to the NAD(+) site. Lysine 140 contacts substrate. Lysine 225 (proton acceptor) is an active-site residue. Positions 289, 318, and 320 each coordinate NAD(+). Arginine 289–asparagine 290 is a substrate binding site.

It belongs to the NAD-dependent glycerol-3-phosphate dehydrogenase family.

The enzyme catalyses sn-glycerol 3-phosphate + NAD(+) = dihydroxyacetone phosphate + NADH + H(+). In Cuphea lanceolata (Cigar flower), this protein is Glycerol-3-phosphate dehydrogenase [NAD(+)] (GPDH).